The chain runs to 476 residues: Protein DETOXIFICATION 1 (476 aa).

Helical transmembrane passes span 35 to 55, 66 to 86, 117 to 137, 146 to 166, 184 to 204, 208 to 228, 260 to 280, 289 to 309, 331 to 351, 370 to 390, 402 to 422, and 433 to 453; these read AAPMATVTIAQYLLPVISVMV, GVALANSFTNVTGFSIMCGLV, IPICFLISILWLYIEKILISL, IAGSYAFWLIPALFGQAIVIP, AVTTLLFHVLVCWTLVFLFGL, GPAMATSVSFWFYAVILSCYV, AAMICLEWWLFEILILCSGLL, VLSICLTIETLHYVISAGVAA, VLAGLCLWIVESAFFSILLFT, VADLTPLLCLSFILDGFTAVL, IGAWNNTVSYYLVGAPVGIYL, and LWCGVVVGSTVQATILAIVTA.

Belongs to the multi antimicrobial extrusion (MATE) (TC 2.A.66.1) family. Ubiquitous. Highest expression in flowers and stems.

The protein localises to the cell membrane. In terms of biological role, efflux carrier for plant-derived alkaloids, antibiotics, heavy metal and other toxic compounds. Involved in cadmium detoxification. Requires probably a proton-motive force for the efflux. In Arabidopsis thaliana (Mouse-ear cress), this protein is Protein DETOXIFICATION 1.